Consider the following 304-residue polypeptide: Nod factor export ATP-binding protein I (304 aa).

The ABC transporter domain maps to 6–236 (IDFQQVEKRY…EIGCDVIEIY (231 aa)). 38-45 (GPNGAGKT) provides a ligand contact to ATP.

It belongs to the ABC transporter superfamily. Lipooligosaccharide exporter (TC 3.A.1.102) family. In terms of assembly, the complex is composed of two ATP-binding proteins (NodI) and two transmembrane proteins (NodJ).

It localises to the cell inner membrane. In terms of biological role, part of the ABC transporter complex NodIJ involved in the export of the nodulation factors (Nod factors), the bacterial signal molecules that induce symbiosis and subsequent nodulation induction. Nod factors are LCO (lipo-chitin oligosaccharide), a modified beta-1,4-linked N-acetylglucosamine oligosaccharide. This subunit is responsible for energy coupling to the transport system. The protein is Nod factor export ATP-binding protein I of Burkholderia pseudomallei (strain K96243).